Consider the following 189-residue polypeptide: Ras-like protein 1 (189 aa).

10 to 17 (GAGGVGKS) lines the GTP pocket. An Effector region motif is present at residues 32–40 (YDPTIEDSY). Residues 57-61 (DTAGQ) and 116-119 (NKCD) contribute to the GTP site. A Cysteine methyl ester modification is found at Cys-186. Residue Cys-186 is the site of S-geranylgeranyl cysteine attachment. Residues 187–189 (KML) constitute a propeptide, removed in mature form.

Belongs to the small GTPase superfamily. Ras family.

The protein resides in the cell membrane. It catalyses the reaction GTP + H2O = GDP + phosphate + H(+). With respect to regulation, alternates between an inactive form bound to GDP and an active form bound to GTP. Activated by a guanine nucleotide-exchange factor (GEF) and inactivated by a GTPase-activating protein (GAP). In terms of biological role, ras proteins bind GDP/GTP and possess intrinsic GTPase activity. Plays a role in eye development by regulating cell growth, survival of postmitotic ommatidial cells and differentiation of photoreceptor cells. During larval development, mediates Ptth/tor signaling leading to the production of ecdysone, a hormone required for the initiation of metamorphosis. The protein is Ras-like protein 1 of Drosophila virilis (Fruit fly).